A 357-amino-acid chain; its full sequence is Cobalt-precorrin-5B C(1)-methyltransferase (357 aa).

This sequence belongs to the CbiD family.

It carries out the reaction Co-precorrin-5B + S-adenosyl-L-methionine = Co-precorrin-6A + S-adenosyl-L-homocysteine. It participates in cofactor biosynthesis; adenosylcobalamin biosynthesis; cob(II)yrinate a,c-diamide from sirohydrochlorin (anaerobic route): step 6/10. Functionally, catalyzes the methylation of C-1 in cobalt-precorrin-5B to form cobalt-precorrin-6A. The protein is Cobalt-precorrin-5B C(1)-methyltransferase of Paramagnetospirillum magneticum (strain ATCC 700264 / AMB-1) (Magnetospirillum magneticum).